The primary structure comprises 214 residues: GTP cyclohydrolase 1 (214 aa).

The Zn(2+) site is built by Cys-108, His-111, and Cys-179.

It belongs to the GTP cyclohydrolase I family. In terms of assembly, toroid-shaped homodecamer, composed of two pentamers of five dimers.

The catalysed reaction is GTP + H2O = 7,8-dihydroneopterin 3'-triphosphate + formate + H(+). Its pathway is cofactor biosynthesis; 7,8-dihydroneopterin triphosphate biosynthesis; 7,8-dihydroneopterin triphosphate from GTP: step 1/1. This is GTP cyclohydrolase 1 from Shewanella loihica (strain ATCC BAA-1088 / PV-4).